Here is a 1616-residue protein sequence, read N- to C-terminus: Replicase large subunit (1616 aa).

The segment at 50–458 (FSKVISEEQT…QSLSMTFYLH (409 aa)) is methyltransferase. The 210-residue stretch at 72 to 281 (TFYNTQNAVH…HSYSNILKYV (210 aa)) folds into the Alphavirus-like MT domain. The (+)RNA virus helicase ATP-binding domain occupies 801–963 (VVYSDMAKLR…KLEVDEVETR (163 aa)). The helicase stretch occupies residues 830-1085 (LVDGVPGCGK…RHTCSLKYYT (256 aa)). 833-840 (GVPGCGKT) contributes to the ATP binding site. The region spanning 964–1116 (RTTLRCPADV…DMYKVDAGTQ (153 aa)) is the (+)RNA virus helicase C-terminal domain. One can recognise a RdRp catalytic domain in the interval 1380 to 1493 (MDVLELDISK…YFPKGCEFPD (114 aa)).

This sequence belongs to the ssRNA positive-strand viruses RNA-directed RNA polymerase family. In terms of assembly, heterodimer of a large and a small subunit.

The enzyme catalyses RNA(n) + a ribonucleoside 5'-triphosphate = RNA(n+1) + diphosphate. The catalysed reaction is ATP + H2O = ADP + phosphate + H(+). Functionally, is an RNA-dependent RNA polymerase active in viral RNA replication. In terms of biological role, is a methyltransferase active in RNA capping and an RNA helicase. Methyltransferase displays a cytoplasmic capping enzyme activity. This function is necessary since all viral RNAs are synthesized in the cytoplasm, and host capping enzymes are restricted to the nucleus. Helicase region probably exhibits NTPase and RNA unwinding activities (Potential). It also acts as a suppressor of RNA-mediated gene silencing, also known as post-transcriptional gene silencing (PTGS), a mechanism of plant viral defense that limits the accumulation of viral RNAs. May mediate silencing suppression through either inhibition of HEN1-mediated siRNA or siRNA demethylation. In Nicotiana tabacum (Common tobacco), this protein is Replicase large subunit.